The following is a 181-amino-acid chain: Probable toxin TacT (181 aa).

The protein belongs to the acetyltransferase family. As to quaternary structure, forms a complex with cognate antitoxin TacA.

Probable toxin component of a type II toxin-antitoxin (TA) system. Might acetylate tRNA and inhibit translation. Should be neutralized by cognate antitoxin TacA (y4aR). This chain is Probable toxin TacT, found in Sinorhizobium fredii (strain NBRC 101917 / NGR234).